A 299-amino-acid chain; its full sequence is ATP phosphoribosyltransferase (299 aa).

Belongs to the ATP phosphoribosyltransferase family. Long subfamily. In terms of assembly, equilibrium between an active dimeric form, an inactive hexameric form and higher aggregates. Interconversion between the various forms is largely reversible and is influenced by the natural substrates and inhibitors of the enzyme. The cofactor is Mg(2+).

The protein localises to the cytoplasm. It carries out the reaction 1-(5-phospho-beta-D-ribosyl)-ATP + diphosphate = 5-phospho-alpha-D-ribose 1-diphosphate + ATP. Its pathway is amino-acid biosynthesis; L-histidine biosynthesis; L-histidine from 5-phospho-alpha-D-ribose 1-diphosphate: step 1/9. Its activity is regulated as follows. Feedback inhibited by histidine. In terms of biological role, catalyzes the condensation of ATP and 5-phosphoribose 1-diphosphate to form N'-(5'-phosphoribosyl)-ATP (PR-ATP). Has a crucial role in the pathway because the rate of histidine biosynthesis seems to be controlled primarily by regulation of HisG enzymatic activity. This chain is ATP phosphoribosyltransferase, found in Salmonella dublin (strain CT_02021853).